A 977-amino-acid polypeptide reads, in one-letter code: MFFALLFLIGILLGQVQGWSEPRIRLSSGALAGTDVILESGSPLQLVCEGDGPVTFLPRLAKHKRYISKEVGKIRSFRVEKTTVDFTGTYKCVYMNGNDSNLSSSVHVFVRDSRVLFVSPSTSLRYVRKEGEDLLLPCLLTDPEATDFTFRMDNGSAAPYGMNITYDPRKGVLIRNVHPGFNADYICCARIGGAEKVSKIFSINIIQRLRFPPYVYLKRNEYVKLVGERLQISCTTNNPNFYYNVTWTHSSRMLPKAEEKSTMEGDRLAIESILTIPSVQLSHTGNITCTGQNEAGANSSTTQLLVVEEPYIRLSPKLSSKLTHRGLSIEVSEGDDVDLGVLIEAYPPLTSHKWETPTSHNASLPENRFFNHNDRYEALLLLKRLNFEEIGQYTLNVKNSMKSASITFDIKMYTKPVARVKWENVTTLSCRSYGYPAPSILWYQCTGIRTTCPENTTDLQPIQTQTVEFQKESFGAVGVESVLTVGPNRRMTVVCVAFNLVGQGSDTFSMEVSDQIFTSAMCGSTVAMVVLGLLLIFMIYKYKQKPRYEIRWKIIEATNGNNYTFIDPTQLPYNEKWEFPRDKLKLGKTLGAGAFGKVVEATAYGLGKEDNITRVAVKMLKASAHPDEREALMSELKILSHLGQHKNIVNLLGACTHGGPVLVITEYCCHGDLLNFLRSKAENFLNFVMTIPNFPEPMTDYKNVSTERMFVRSDSGISSTCSDHYLDMRPVTSRPTNSALDSSSECQEDSWPLDMDDLLRFSSQVAQGLDFLAAKNCIHRDVAARNVLLTNSRVAKICDFGLARDIMNDSNYVVKGNARLPVKWMAPESIFECVYTVQSDVWSYGIMLWEIFSLGKSPYPNILVDSKFYKMIKCGYQMSRPDFAPPEMYTIMKMCWNLDAAERPTFSKISQMIQRMLGETSEQQDTQEYKNIPTEAEAEQQLESCDPVKHEDESFETSCDQEEEDQPLMKPNNYQFC.

A signal peptide spans 1–18 (MFFALLFLIGILLGQVQG). Topologically, residues 19-519 (WSEPRIRLSS…MEVSDQIFTS (501 aa)) are extracellular. Ig-like C2-type domains lie at 22-109 (PRIR…VHVF), 120-198 (PSTS…EKVS), 213-305 (PYVY…TQLL), 316-407 (PKLS…ASIT), and 408-513 (FDIK…MEVS). An intrachain disulfide couples Cys48 to Cys92. Asn98, Asn101, Asn154, Asn163, Asn244, Asn286, Asn298, Asn361, Asn424, and Asn455 each carry an N-linked (GlcNAc...) asparagine glycan. Cystine bridges form between Cys138–Cys187 and Cys234–Cys289. Cysteines 430 and 495 form a disulfide. The chain crosses the membrane as a helical span at residues 520–540 (AMCGSTVAMVVLGLLLIFMIY). The Cytoplasmic portion of the chain corresponds to 541-977 (KYKQKPRYEI…LMKPNNYQFC (437 aa)). Residues 544 to 576 (QKPRYEIRWKIIEATNGNNYTFIDPTQLPYNEK) form a regulatory juxtamembrane domain region. Tyr563 carries the post-translational modification Phosphotyrosine; by autocatalysis. The 334-residue stretch at 584 to 917 (LKLGKTLGAG…KISQMIQRML (334 aa)) folds into the Protein kinase domain. Residues 590–598 (LGAGAFGKV) and Lys618 each bind ATP. 2 positions are modified to phosphotyrosine; by autocatalysis: Tyr701 and Tyr725. The active-site Proton acceptor is the Asp781. The segment at 799–821 (DFGLARDIMNDSNYVVKGNARLP) is activation loop. Phosphotyrosine; by autocatalysis occurs at positions 812 and 929. A disordered region spans residues 919-977 (ETSEQQDTQEYKNIPTEAEAEQQLESCDPVKHEDESFETSCDQEEEDQPLMKPNNYQFC). The segment covering 953–966 (ESFETSCDQEEEDQ) has biased composition (acidic residues). Residue Tyr974 is modified to Phosphotyrosine; by autocatalysis.

Belongs to the protein kinase superfamily. Tyr protein kinase family. CSF-1/PDGF receptor subfamily. In terms of assembly, monomer. Homodimer. Interacts with CSF1. Post-translationally, autophosphorylated in response to CSF1 binding. autophosphorylation, leading to its degradation. Ubiquitinated. Becomes rapidly polyubiquitinated after autophosphorylation, leading to its degradation.

It localises to the cell membrane. The enzyme catalyses L-tyrosyl-[protein] + ATP = O-phospho-L-tyrosyl-[protein] + ADP + H(+). With respect to regulation, present in an inactive conformation in the absence of bound ligand. CSF1 binding leads to dimerization and activation by autophosphorylation on tyrosine residues. Its function is as follows. Tyrosine-protein kinase that acts as a cell-surface receptor for CSF1 and plays an essential role in the regulation of survival, proliferation and differentiation of hematopoietic precursor cells, especially mononuclear phagocytes, such as macrophages and monocytes. Plays an important role in innate immunity and in inflammatory processes. Plays an important role in the regulation of osteoclast proliferation and differentiation, the regulation of bone resorption, and is required for normal bone development. Promotes reorganization of the actin cytoskeleton, regulates formation of membrane ruffles, cell adhesion and cell migration. Activates several signaling pathways in response to ligand binding. This chain is Macrophage colony-stimulating factor 1 receptor (csf1r), found in Danio rerio (Zebrafish).